The following is a 61-amino-acid chain: Small ribosomal subunit protein uS14B (61 aa).

Cysteine 24, cysteine 27, cysteine 40, and cysteine 43 together coordinate Zn(2+).

The protein belongs to the universal ribosomal protein uS14 family. Zinc-binding uS14 subfamily. In terms of assembly, part of the 30S ribosomal subunit. Contacts proteins S3 and S10. Requires Zn(2+) as cofactor.

Functionally, binds 16S rRNA, required for the assembly of 30S particles and may also be responsible for determining the conformation of the 16S rRNA at the A site. This is Small ribosomal subunit protein uS14B from Levilactobacillus brevis (strain ATCC 367 / BCRC 12310 / CIP 105137 / JCM 1170 / LMG 11437 / NCIMB 947 / NCTC 947) (Lactobacillus brevis).